Here is a 1351-residue protein sequence, read N- to C-terminus: DNA-directed RNA polymerase subunit beta' (1351 aa).

Residues Cys-70, Cys-72, Cys-85, and Cys-88 each contribute to the Zn(2+) site. Asp-460, Asp-462, and Asp-464 together coordinate Mg(2+). Zn(2+) contacts are provided by Cys-801, Cys-875, Cys-882, and Cys-885.

Belongs to the RNA polymerase beta' chain family. The RNAP catalytic core consists of 2 alpha, 1 beta, 1 beta' and 1 omega subunit. When a sigma factor is associated with the core the holoenzyme is formed, which can initiate transcription. Mg(2+) is required as a cofactor. The cofactor is Zn(2+).

The enzyme catalyses RNA(n) + a ribonucleoside 5'-triphosphate = RNA(n+1) + diphosphate. DNA-dependent RNA polymerase catalyzes the transcription of DNA into RNA using the four ribonucleoside triphosphates as substrates. The sequence is that of DNA-directed RNA polymerase subunit beta' from Syntrophobacter fumaroxidans (strain DSM 10017 / MPOB).